The primary structure comprises 343 residues: MAIASNVVEAGNAVRAEKGRKYFYFRKMIGDYIDTSIRIVATVFLADLLLRLYRCVVEYGSNGRYYLPEDRLWIILRRSCTYNNRSIYLIVGFLLVAFFRISVTGNYRNVMPTTLFLFQMPLYWIWSFTDMDQSTLSYSHWIRDSHGLDYAAGMASNYFHGYLKLSLPERKDDGLKHRLAMYEDKNNVTFGIKRLVILIPDEMFVNGVLESHLLDKAEPLETQFINRAGVYRPFKHDVYRMNKKVNGRTYYFAVEGATPMISFFDATYSNLSGTWQMQELKREIWIKFYKHLKELITTWPETRDLVELIIYNSHDSKGNLVDVGELLVAHMQNKTKTIDEISN.

Asn-84 carries N-linked (GlcNAc...) asparagine glycosylation. 2 helical membrane-spanning segments follow: residues 87 to 107 and 109 to 129; these read IYLIVGFLLVAFFRISVTGNY and NVMPTTLFLFQMPLYWIWSFT. Residue Asn-157 coordinates 3',2'-cGAMP. Asn-187 carries N-linked (GlcNAc...) asparagine glycosylation. A helical membrane pass occupies residues 195-215; that stretch reads LVILIPDEMFVNGVLESHLLD. Residues Arg-232, Lys-235, Glu-255, Thr-258, and Ser-262 each coordinate 3',2'-cGAMP. Asn-270 and Asn-333 each carry an N-linked (GlcNAc...) asparagine glycan.

This sequence belongs to the STING family.

It localises to the endoplasmic reticulum membrane. Its function is as follows. Facilitator of innate immune signaling that binds cyclic dinucleotides produced in response to infection by bacteria and/or viruses, and promotes the activation of the NF-kappa-B transcription factor Rel (Relish). Recognizes and binds cyclic di-GMP (c-di-GMP), a cyclic dinucleotide messenger produced by bacteria such as L.monocytogenes, leading to activation of the peptidoglycan recognition protein (IMD) signaling pathway and activation of Rel (Relish). Innate immune response is triggered in response to double-stranded RNA from viruses delivered to the cytoplasm: Sting acts by specifically binding cyclic dinucleotides 3',2'-cGAMP and 2',3'-cGAMP produced by cGlr1 and cGlr2 in response to RNA virus in the cytosol. Has a strong preference for 3',2'-cGAMP compared to other cyclic dinucleotides such as 2',3'-cGAMP or 3'3'-c-di-GMP. Upon binding to 3',2'-cGAMP, activates an antiviral immune response, leading to the activation of Rel (Relish). Activated in brain in response to Zika virus infection, leading to autophagy. In Drosophila melanogaster (Fruit fly), this protein is Stimulator of interferon genes protein homolog.